The following is a 757-amino-acid chain: E3 ubiquitin-protein ligase SMURF1 (757 aa).

Residues 1-120 enclose the C2 domain; that stretch reads MSNPGTRRNG…TGYQRLDLCK (120 aa). Residues 193 to 237 are disordered; sequence GNCRFVESPSQDQRLQAQRLRNPDVRGSLQTPQNRPHGHQSPELP. Serine 200 is modified (phosphoserine). WW domains are found at residues 234-267 and 306-339; these read PELPEGYEQRTTVQGQVYFLHTQTGVSTWHDPRI and GPLPPGWEVRSTVSGRIYFVDHNNRTTQFTDPRL. Residues lysine 381 and lysine 383 each participate in a glycyl lysine isopeptide (Lys-Gly) (interchain with G-Cter in ubiquitin) cross-link. An HECT domain is found at 420-757; it reads RPKDLKKRLM…VEETCGFAVE (338 aa). The active-site Glycyl thioester intermediate is the cysteine 725.

Interacts with TRAF4. Interacts (via HECT domain) with FBXL15 (via LRR repeats). Interacts with SMAD7 and TGFBR1; SMAD7 recruits SMURF1 to TGFBR1 and regulates TGF-beta receptor degradation. Interacts with MAVS; the interaction is mediated by NDFIP1. In terms of processing, auto-ubiquitinated in presence of NDFIP1. Ubiquitinated by the SCF(FBXL15) complex at Lys-381 and Lys-383, leading to its degradation by the proteasome. Lys-383 is the primary ubiquitination site. As to expression, expressed in melanocytes.

The protein resides in the cytoplasm. It is found in the cell membrane. The enzyme catalyses S-ubiquitinyl-[E2 ubiquitin-conjugating enzyme]-L-cysteine + [acceptor protein]-L-lysine = [E2 ubiquitin-conjugating enzyme]-L-cysteine + N(6)-ubiquitinyl-[acceptor protein]-L-lysine.. Its pathway is protein modification; protein ubiquitination. Its function is as follows. E3 ubiquitin-protein ligase that acts as a negative regulator of BMP signaling pathway. Mediates ubiquitination and degradation of SMAD1 and SMAD5, 2 receptor-regulated SMADs specific for the BMP pathway. Promotes ubiquitination and subsequent proteasomal degradation of TRAF family members and RHOA. Promotes ubiquitination and subsequent proteasomal degradation of MAVS. Acts as an antagonist of TGF-beta signaling by ubiquitinating TGFBR1 and targeting it for degradation. Plays a role in dendrite formation by melanocytes. This Homo sapiens (Human) protein is E3 ubiquitin-protein ligase SMURF1 (SMURF1).